The chain runs to 699 residues: Glycine--tRNA ligase beta subunit (699 aa).

Belongs to the class-II aminoacyl-tRNA synthetase family. As to quaternary structure, tetramer of two alpha and two beta subunits.

The protein resides in the cytoplasm. The enzyme catalyses tRNA(Gly) + glycine + ATP = glycyl-tRNA(Gly) + AMP + diphosphate. The protein is Glycine--tRNA ligase beta subunit of Baumannia cicadellinicola subsp. Homalodisca coagulata.